We begin with the raw amino-acid sequence, 433 residues long: uncharacterized protein (433 aa).

Positions 258-304 (KNIKSKLLLELRQLKNNITNLQNKITKTMDNVKKIIEEIEQSKNKVT) form a coiled coil.

This sequence belongs to the mimivirus R160 family.

Its subcellular location is the virion. This is an uncharacterized protein from Acanthamoeba polyphaga mimivirus (APMV).